The following is a 511-amino-acid chain: Protoheme IX farnesyltransferase, mitochondrial (511 aa).

The transit peptide at 1 to 23 (MSSSTESLPGTLRRTLTTSRAPA) directs the protein to the mitochondrion. 2 disordered regions span residues 1 to 27 (MSSS…ATSS) and 50 to 136 (HDSA…LAPD). 3 stretches are compositionally biased toward low complexity: residues 52-79 (SASS…SSTT), 104-115 (RKAAAAAAAAAA), and 126-136 (PDAPTADLAPD). Transmembrane regions (helical) follow at residues 168–188 (LTVL…VPSF), 197–217 (SLAP…TTLC), 253–273 (AAVL…YFGV), 275–295 (PTVS…YTPL), 303–323 (TWVG…AAAG), 344–364 (LGGW…FMPL), 398–418 (AFIP…SFAV), and 444–464 (ARGL…LALA).

This sequence belongs to the UbiA prenyltransferase family.

The protein resides in the mitochondrion membrane. Converts protoheme IX and farnesyl diphosphate to heme O. This chain is Protoheme IX farnesyltransferase, mitochondrial (pft-1), found in Neurospora crassa (strain ATCC 24698 / 74-OR23-1A / CBS 708.71 / DSM 1257 / FGSC 987).